Consider the following 758-residue polypeptide: 5-methyltetrahydropteroyltriglutamate--homocysteine methyltransferase (758 aa).

5-methyltetrahydropteroyltri-L-glutamate contacts are provided by residues 17 to 20 (RELK) and Lys117. L-homocysteine-binding positions include 434-436 (IGS) and Glu487. Residues 434–436 (IGS) and Glu487 each bind L-methionine. Residues 518-519 (RC) and Trp564 contribute to the 5-methyltetrahydropteroyltri-L-glutamate site. Asp602 is an L-homocysteine binding site. Asp602 provides a ligand contact to L-methionine. Glu608 contributes to the 5-methyltetrahydropteroyltri-L-glutamate binding site. Residues His644, Cys646, and Glu668 each coordinate Zn(2+). The active-site Proton donor is the His697. Cys729 lines the Zn(2+) pocket.

Belongs to the vitamin-B12 independent methionine synthase family. Zn(2+) serves as cofactor.

It catalyses the reaction 5-methyltetrahydropteroyltri-L-glutamate + L-homocysteine = tetrahydropteroyltri-L-glutamate + L-methionine. Its pathway is amino-acid biosynthesis; L-methionine biosynthesis via de novo pathway; L-methionine from L-homocysteine (MetE route): step 1/1. In terms of biological role, catalyzes the transfer of a methyl group from 5-methyltetrahydrofolate to homocysteine resulting in methionine formation. The protein is 5-methyltetrahydropteroyltriglutamate--homocysteine methyltransferase of Yersinia pestis (strain Pestoides F).